The primary structure comprises 150 residues: Deoxyuridine 5'-triphosphate nucleotidohydrolase (150 aa).

Residues 69 to 71 (RSG), N82, 86 to 88 (LID), and K96 each bind substrate.

It belongs to the dUTPase family. Mg(2+) serves as cofactor.

The enzyme catalyses dUTP + H2O = dUMP + diphosphate + H(+). Its pathway is pyrimidine metabolism; dUMP biosynthesis; dUMP from dCTP (dUTP route): step 2/2. In terms of biological role, this enzyme is involved in nucleotide metabolism: it produces dUMP, the immediate precursor of thymidine nucleotides and it decreases the intracellular concentration of dUTP so that uracil cannot be incorporated into DNA. This Neisseria meningitidis serogroup A / serotype 4A (strain DSM 15465 / Z2491) protein is Deoxyuridine 5'-triphosphate nucleotidohydrolase.